Here is a 213-residue protein sequence, read N- to C-terminus: DNA-directed RNA polymerase subunit alpha (213 aa).

It belongs to the RNA polymerase alpha chain family. In plastids the minimal PEP RNA polymerase catalytic core is composed of four subunits: alpha, beta, beta', and beta''. When a (nuclear-encoded) sigma factor is associated with the core the holoenzyme is formed, which can initiate transcription.

Its subcellular location is the plastid. The protein localises to the chloroplast. It carries out the reaction RNA(n) + a ribonucleoside 5'-triphosphate = RNA(n+1) + diphosphate. DNA-dependent RNA polymerase catalyzes the transcription of DNA into RNA using the four ribonucleoside triphosphates as substrates. In Euglena stellata, this protein is DNA-directed RNA polymerase subunit alpha (rpoA).